We begin with the raw amino-acid sequence, 726 residues long: MMKDTFKNVLSFEFWQKFGKALMVVIAVMPAAGLMISIGKSIVMINPTFAPLVITGGILEQIGWGVIGNLHILFALAIGGSWAKERAGGAFAAGLAFILINRITGTIFGVSGDMLKNPDAMVTTFFGGSIKVADYFISVLEAPALNMGVFVGIISGFVGATAYNKYYNFRKLPDALSFFNGKRFVPFVVILRSAIAAILLAAFWPVVQTGINNFGIWIANSQETAPILAPFLYGTLERLLLPFGLHHMLTIPMNYTALGGTYDILTGAAKGTQVFGQDPLWLAWVTDLVNLKGTDASQYQHLLDTVHPARFKVGQMIGSFGILMGVIVAIYRNVDADKKHKYKGMMIATALATFLTGVTEPIEYMFMFIATPMYLVYSLVQGAAFAMADVVNLRMHSFGSIEFLTRTPIAISAGIGMDIVNFVWVTVLFAVIMYFIANFMIQKFNYATPGRNGNYETAEGSEETSSEVKVAAGSQAVNIINLLGGRVNIVDVDACMTRLRVTVKDADKVGNAEQWKAEGAMGLVMKGQGVQAIYGPKADILKSDIQDILDSGEIIPETLPSQMTEAQQNTVHFKDLTEEVYSVADGQVVALEQVKDPVFAQKMMGDGFAVEPANGNIVSPVSGTVSSIFPTKHAFGIVTEAGLEVLVHIGLDTVSLEGKPFTVHVAEGQKVAAGDLLVTADLDAIRAAGRETSTVVVFTNGDAIKSVKLEKTGSLAAKTAVAKVEL.

Residues 1–453 (MMKDTFKNVL…FNYATPGRNG (453 aa)) form the PTS EIIC type-1 domain. 9 consecutive transmembrane segments (helical) span residues 18–38 (FGKALMVVIAVMPAAGLMISI), 62–82 (IGWGVIGNLHILFALAIGGSW), 90–110 (AFAAGLAFILINRITGTIFGV), 139–159 (VLEAPALNMGVFVGIISGFVG), 184–204 (FVPFVVILRSAIAAILLAAFW), 311–331 (FKVGQMIGSFGILMGVIVAIY), 344–364 (GMMIATALATFLTGVTEPIEY), 365–385 (MFMFIATPMYLVYSLVQGAAF), and 419–439 (IVNFVWVTVLFAVIMYFIANF). Residues 473 to 555 (GSQAVNIINL…QDILDSGEII (83 aa)) form the PTS EIIB type-1 domain. Cys495 (phosphocysteine intermediate; for EIIB activity) is an active-site residue. A PTS EIIA type-1 domain is found at 596–700 (DPVFAQKMMG…ETSTVVVFTN (105 aa)). His648 (tele-phosphohistidine intermediate; for EIIA activity) is an active-site residue.

It is found in the cell membrane. The enzyme catalyses N(pros)-phospho-L-histidyl-[protein] + D-glucose(out) = D-glucose 6-phosphate(in) + L-histidyl-[protein]. The phosphoenolpyruvate-dependent sugar phosphotransferase system (sugar PTS), a major carbohydrate active transport system, catalyzes the phosphorylation of incoming sugar substrates concomitantly with their translocation across the cell membrane. This system is involved in glucose transport. This is PTS system glucose-specific EIICBA component (exp5) from Streptococcus pneumoniae serotype 4 (strain ATCC BAA-334 / TIGR4).